The chain runs to 250 residues: Protein orai-2 (250 aa).

4 helical membrane passes run 66 to 83, 94 to 114, 148 to 168, and 192 to 212; these read TSALLSGFAMVAMVEVQL, LIAFSACTTVLVAVHLFALLI, LAWGFSTVLGILLFLAEVVLL, and AALVSTIIMVPVGLIFVVFTI.

This sequence belongs to the Orai family. In terms of assembly, oligomerizes in homomeric and heteromeric ORAI complexes. Native CRAC channels most likely consist of hexameric ORAI heteromers, implying that diverse ORAI1, ORAI2 and ORAI3 subunit combinations with distinct biophysical properties can operate in a cell-type specific way. Interacts with STIM1; this regulates channel activity. Interacts with CRACR2A/EFCAB4B.

The protein localises to the cell membrane. It carries out the reaction Ca(2+)(in) = Ca(2+)(out). CRAC channels are regulated by fast Ca(2+)-dependent inactivation (FCDI), a mechanism that limits Ca(2+) influx and cell toxicity. ORAI2 channels display prominent FCDI. Inhibited by lanthanides such as Gd(3+) ions. In terms of biological role, pore-forming subunit of inward rectifying Ca(2+) release-activated Ca(2+) (CRAC) channels. Assembles with ORAI1 and ORAI3 to form hexameric CRAC channels that mediate Ca(2+) influx upon depletion of endoplasmic reticulum Ca(2+) store and channel activation by Ca(2+) sensor STIM1, a process known as store-operated Ca(2+) entry (SOCE). Various pore subunit combinations may account for distinct CRAC channel spatiotemporal and cell-type specific dynamics. ORAI1 mainly contributes to the generation of Ca(2+) plateaus involved in sustained Ca(2+) entry and is dispensable for cytosolic Ca(2+) oscillations, whereas ORAI2 and ORAI3 generate oscillatory patterns. CRAC channels assemble in Ca(2+) signaling microdomains where Ca(2+) influx is coupled to calmodulin and calcineurin signaling and activation of NFAT transcription factors recruited to ORAI1 via AKAP5. CRAC channels are the main pathway for Ca(2+) influx in T cells and promote the immune response to pathogens by activating NFAT-dependent cytokine and chemokine transcription. This is Protein orai-2 (Orai2) from Mus musculus (Mouse).